Here is a 401-residue protein sequence, read N- to C-terminus: Imidazolonepropionase (401 aa).

Fe(3+) contacts are provided by His-66 and His-68. His-66 and His-68 together coordinate Zn(2+). 3 residues coordinate 4-imidazolone-5-propanoate: Arg-75, Tyr-138, and His-171. Tyr-138 is an N-formimidoyl-L-glutamate binding site. His-236 contacts Fe(3+). His-236 provides a ligand contact to Zn(2+). 4-imidazolone-5-propanoate is bound at residue Gln-239. Asp-311 lines the Fe(3+) pocket. Asp-311 lines the Zn(2+) pocket. Residues Asn-313 and Gly-315 each contribute to the N-formimidoyl-L-glutamate site. Thr-316 is a 4-imidazolone-5-propanoate binding site.

The protein belongs to the metallo-dependent hydrolases superfamily. HutI family. The cofactor is Zn(2+). It depends on Fe(3+) as a cofactor.

The protein resides in the cytoplasm. The enzyme catalyses 4-imidazolone-5-propanoate + H2O = N-formimidoyl-L-glutamate. It functions in the pathway amino-acid degradation; L-histidine degradation into L-glutamate; N-formimidoyl-L-glutamate from L-histidine: step 3/3. Catalyzes the hydrolytic cleavage of the carbon-nitrogen bond in imidazolone-5-propanoate to yield N-formimidoyl-L-glutamate. It is the third step in the universal histidine degradation pathway. This Acinetobacter baumannii (strain AB0057) protein is Imidazolonepropionase.